The following is a 79-amino-acid chain: Succinate dehydrogenase assembly factor 1, mitochondrial (79 aa).

This sequence belongs to the complex I LYR family. SDHAF1 subfamily. In terms of assembly, interacts with SDH2 within an SDH1-SDH2 subcomplex.

The protein localises to the mitochondrion matrix. Plays an essential role in the assembly of succinate dehydrogenase (SDH), an enzyme complex (also referred to as respiratory complex II) that is a component of both the tricarboxylic acid (TCA) cycle and the mitochondrial electron transport chain, and which couples the oxidation of succinate to fumarate with the reduction of ubiquinone (coenzyme Q) to ubiquinol. Promotes maturation of the iron-sulfur protein subunit SDH2 of the SDH catalytic dimer, protecting it from the deleterious effects of oxidants. Acts together with SDHAF3 (SDH7). In Saccharomyces cerevisiae (strain YJM789) (Baker's yeast), this protein is Succinate dehydrogenase assembly factor 1, mitochondrial.